Reading from the N-terminus, the 360-residue chain is Peptide chain release factor 1 (360 aa).

Gln-235 carries the post-translational modification N5-methylglutamine. The disordered stretch occupies residues 285–313 (KRQQAEASTRRNLLGSGDRSDRNRTYNFP).

The protein belongs to the prokaryotic/mitochondrial release factor family. Post-translationally, methylated by PrmC. Methylation increases the termination efficiency of RF1.

It is found in the cytoplasm. Peptide chain release factor 1 directs the termination of translation in response to the peptide chain termination codons UAG and UAA. This is Peptide chain release factor 1 from Enterobacter sp. (strain 638).